Consider the following 167-residue polypeptide: Osteocalcin 2a (167 aa).

The N-terminal stretch at 1–18 is a signal peptide; the sequence is MKSLTLLTICAVLSVSLS. The propeptide occupies 19 to 118; sequence MNDLALDVVL…LASVLLRRKR (100 aa). The disordered stretch occupies residues 28–99; the sequence is LDPAPDPATE…TTEDPAAATE (72 aa). Residues 38 to 87 show a composition bias toward low complexity; the sequence is PAPAADSSASSSASSSSSSASDSSASASDSSDSDSSSASSSSSSSESASA. The Gla domain maps to 131–163; sequence QVESLSEVCELNLACEHMAETAGIVAAYTAYYG. Ca(2+)-binding residues include Glu133, Glu137, and Glu140. Glu133, Glu137, and Glu140 each carry 4-carboxyglutamate. Cys139 and Cys145 are joined by a disulfide.

The protein belongs to the osteocalcin/matrix Gla protein family. In terms of processing, gamma-carboxyglutamate residues are formed by vitamin K dependent carboxylation. These residues are essential for the binding of calcium.

It is found in the secreted. Binds strongly to apatite and calcium. The protein is Osteocalcin 2a of Oncorhynchus mykiss (Rainbow trout).